Consider the following 199-residue polypeptide: Superoxide dismutase [Mn/Fe] 2 (199 aa).

Histidine 27, histidine 81, aspartate 161, and histidine 165 together coordinate Fe(3+). Mn(2+) is bound by residues histidine 27, histidine 81, aspartate 161, and histidine 165.

It belongs to the iron/manganese superoxide dismutase family. Homodimer. Can also form a heterodimer with SodA. Mn(2+) serves as cofactor. It depends on Fe(3+) as a cofactor.

It catalyses the reaction 2 superoxide + 2 H(+) = H2O2 + O2. In terms of biological role, destroys superoxide anion radicals which are normally produced within the cells and which are toxic to biological systems. Catalyzes the dismutation of superoxide anion radicals into O2 and H2O2 by successive reduction and oxidation of the transition metal ion at the active site. This is Superoxide dismutase [Mn/Fe] 2 (sodM) from Staphylococcus aureus (strain bovine RF122 / ET3-1).